Here is a 737-residue protein sequence, read N- to C-terminus: Propionyl-CoA carboxylase alpha chain, mitochondrial (737 aa).

The N-terminal 61 residues, methionine 1–serine 61, are a transit peptide targeting the mitochondrion. A Biotin carboxylation domain is found at threonine 71–proline 518. Lysine 74 is subject to N6-acetyllysine; alternate. Residue lysine 74 is modified to N6-succinyllysine; alternate. Lysine 128 is subject to N6-succinyllysine. Residue lysine 159 is modified to N6-acetyllysine; alternate. Lysine 159 carries the N6-succinyllysine; alternate modification. Position 163 is an N6-acetyllysine (lysine 163). Lysine 186 lines the ATP pocket. Positions lysine 190 to lysine 387 constitute an ATP-grasp domain. The residue at position 197 (lysine 197) is an N6-succinyllysine. At lysine 209 the chain carries N6-acetyllysine; alternate. Lysine 209 carries the post-translational modification N6-succinyllysine; alternate. Residues alanine 218 to isoleucine 279, glutamate 270, and asparagine 305 each bind ATP. Position 261 is a phosphoserine (serine 261). Lysine 271 is subject to N6-succinyllysine. Lysine 337 bears the N6-acetyllysine; alternate mark. Lysine 337 bears the N6-succinyllysine; alternate mark. Mg(2+)-binding residues include glutamate 345, glutamate 358, and asparagine 360. The Mn(2+) site is built by glutamate 345, glutamate 358, and asparagine 360. Residue arginine 362 is part of the active site. An N6-succinyllysine mark is found at lysine 394 and lysine 416. Phenylalanine 418 is a binding site for biotin. An N6-acetyllysine modification is found at lysine 505. An N6-succinyllysine mark is found at lysine 511, lysine 522, lysine 567, and lysine 657. The Biotinyl-binding domain maps to phenylalanine 658–glutamate 737. Lysine 703 carries the N6-biotinyllysine; by HLCS modification.

In terms of assembly, the holoenzyme is a dodecamer composed of 6 PCCA/alpha subunits and 6 PCCB/beta subunits. Interacts (via the biotin carboxylation domain) with SIRT4. Interacts with SIRT3 and SIRT5. Biotin is required as a cofactor. Mg(2+) serves as cofactor. Requires Mn(2+) as cofactor. Post-translationally, acetylated. The biotin cofactor is covalently attached to the C-terminal biotinyl-binding domain and is required for the catalytic activity. Biotinylation is catalyzed by HLCS.

The protein localises to the mitochondrion matrix. The catalysed reaction is propanoyl-CoA + hydrogencarbonate + ATP = (S)-methylmalonyl-CoA + ADP + phosphate + H(+). It catalyses the reaction butanoyl-CoA + hydrogencarbonate + ATP = (2S)-ethylmalonyl-CoA + ADP + phosphate + H(+). Its pathway is metabolic intermediate metabolism; propanoyl-CoA degradation; succinyl-CoA from propanoyl-CoA: step 1/3. Its function is as follows. This is one of the 2 subunits of the biotin-dependent propionyl-CoA carboxylase (PCC), a mitochondrial enzyme involved in the catabolism of odd chain fatty acids, branched-chain amino acids isoleucine, threonine, methionine, and valine and other metabolites. Propionyl-CoA carboxylase catalyzes the carboxylation of propionyl-CoA/propanoyl-CoA to D-methylmalonyl-CoA/(S)-methylmalonyl-CoA. Within the holoenzyme, the alpha subunit catalyzes the ATP-dependent carboxylation of the biotin carried by the biotin carboxyl carrier (BCC) domain, while the beta subunit then transfers the carboxyl group from carboxylated biotin to propionyl-CoA. Propionyl-CoA carboxylase also significantly acts on butyryl-CoA/butanoyl-CoA, which is converted to ethylmalonyl-CoA/(2S)-ethylmalonyl-CoA. Other alternative minor substrates include (2E)-butenoyl-CoA/crotonoyl-CoA. The polypeptide is Propionyl-CoA carboxylase alpha chain, mitochondrial (Rattus norvegicus (Rat)).